Consider the following 133-residue polypeptide: Small ribosomal subunit protein uS8 (133 aa).

The protein belongs to the universal ribosomal protein uS8 family. As to quaternary structure, part of the 30S ribosomal subunit. Contacts proteins S5 and S12.

One of the primary rRNA binding proteins, it binds directly to 16S rRNA central domain where it helps coordinate assembly of the platform of the 30S subunit. This is Small ribosomal subunit protein uS8 from Rhodopirellula baltica (strain DSM 10527 / NCIMB 13988 / SH1).